The chain runs to 524 residues: Ribonuclease Y (524 aa).

A helical transmembrane segment spans residues 3–23 (IVINLFLLVPASIVFFAAGFF). The segment at 96–127 (QQREGQLKKQAQDNRDMERRLQDQRKENEQVQ) is disordered. The span at 100–124 (GQLKKQAQDNRDMERRLQDQRKENE) shows a compositional bias: basic and acidic residues. The KH domain maps to 214–280 (ALSVVHIQTD…KLTLQKLLSE (67 aa)). In terms of domain architecture, HD spans 340 to 432 (LLQHSREVAM…VDAANVISLS (93 aa)).

This sequence belongs to the RNase Y family.

The protein localises to the cell membrane. In terms of biological role, endoribonuclease that initiates mRNA decay. The protein is Ribonuclease Y of Chlorobium phaeovibrioides (strain DSM 265 / 1930) (Prosthecochloris vibrioformis (strain DSM 265)).